The sequence spans 101 residues: Small ribosomal subunit protein uS17 (101 aa).

It belongs to the universal ribosomal protein uS17 family. Part of the 30S ribosomal subunit.

One of the primary rRNA binding proteins, it binds specifically to the 5'-end of 16S ribosomal RNA. The chain is Small ribosomal subunit protein uS17 from Leifsonia xyli subsp. xyli (strain CTCB07).